The chain runs to 331 residues: RNA 3'-terminal phosphate cyclase (331 aa).

Residues Gln100 and 276-280 (HLADQ) each bind ATP. Residue His301 is the Tele-AMP-histidine intermediate of the active site.

Belongs to the RNA 3'-terminal cyclase family. Type 1 subfamily.

The protein resides in the cytoplasm. It carries out the reaction a 3'-end 3'-phospho-ribonucleotide-RNA + ATP = a 3'-end 2',3'-cyclophospho-ribonucleotide-RNA + AMP + diphosphate. Catalyzes the conversion of 3'-phosphate to a 2',3'-cyclic phosphodiester at the end of RNA. The mechanism of action of the enzyme occurs in 3 steps: (A) adenylation of the enzyme by ATP; (B) transfer of adenylate to an RNA-N3'P to produce RNA-N3'PP5'A; (C) and attack of the adjacent 2'-hydroxyl on the 3'-phosphorus in the diester linkage to produce the cyclic end product. The biological role of this enzyme is unknown but it is likely to function in some aspects of cellular RNA processing. The sequence is that of RNA 3'-terminal phosphate cyclase from Methanosarcina barkeri (strain Fusaro / DSM 804).